The following is a 491-amino-acid chain: 3-octaprenyl-4-hydroxybenzoate carboxy-lyase (491 aa).

N172 is a binding site for Mn(2+). Prenylated FMN contacts are provided by residues 175–177 (IYR), 189–191 (RWL), and 194–195 (RG). E238 contacts Mn(2+). The Proton donor role is filled by D287.

Belongs to the UbiD family. As to quaternary structure, homohexamer. The cofactor is prenylated FMN. Mn(2+) serves as cofactor.

The protein localises to the cell membrane. The enzyme catalyses a 4-hydroxy-3-(all-trans-polyprenyl)benzoate + H(+) = a 2-(all-trans-polyprenyl)phenol + CO2. Its pathway is cofactor biosynthesis; ubiquinone biosynthesis. Its function is as follows. Catalyzes the decarboxylation of 3-octaprenyl-4-hydroxy benzoate to 2-octaprenylphenol, an intermediate step in ubiquinone biosynthesis. This Alcanivorax borkumensis (strain ATCC 700651 / DSM 11573 / NCIMB 13689 / SK2) protein is 3-octaprenyl-4-hydroxybenzoate carboxy-lyase.